The following is a 387-amino-acid chain: (S)-8-oxocitronellyl enol synthase (387 aa).

NADP(+)-binding positions include 36 to 38 (TGI), 64 to 65 (RR), 82 to 83 (DI), 106 to 107 (SW), and glutamine 140. Residues lysine 144 and tyrosine 177 contribute to the active site. Substrate contacts are provided by lysine 144 and tyrosine 177. NADP(+) contacts are provided by residues tyrosine 177 and 211–213 (SMM).

Belongs to the short-chain dehydrogenases/reductases (SDR) family. Highly divergent. As to expression, expressed in leaves.

The catalysed reaction is (S)-8-oxocitronellyl enol + NADP(+) = (6E)-8-oxogeranial + NADPH + H(+). The enzyme catalyses (S)-8-oxocitronellyl enol + NAD(+) = (6E)-8-oxogeranial + NADH + H(+). It catalyses the reaction (R)-8-oxocitronellyl enol + NADP(+) = (6E)-8-oxogeranial + NADPH + H(+). In terms of biological role, iridoid synthase that catalyzes the first step in generation of the iridoid ring scaffold using the linear monoterpene (6E)-8-oxogeranial as substrate. Reduces 8-oxogeranial, generating an unstable product that is subsequently cyclized into several possible products, either non-enzymically or by dedicated cyclases. Iridoids comprise a large family of distinctive bicyclic monoterpenes that possess a wide range of pharmacological activities, including anticancer, anti-inflammatory, antifungal and antibacterial activities. The chain is (S)-8-oxocitronellyl enol synthase from Antirrhinum majus (Garden snapdragon).